Here is a 713-residue protein sequence, read N- to C-terminus: Probable 1-deoxy-D-xylulose-5-phosphate synthase 2, chloroplastic (713 aa).

The transit peptide at 1-30 (MALQASSSPSMFRAIPTNTNASCRRKLQVR) directs the protein to the chloroplast. Thiamine diphosphate contacts are provided by residues His140 and 181 to 183 (GHS). Mg(2+) is bound at residue Asp212. Residues 213 to 214 (GA), Asn241, Tyr362, and Glu444 contribute to the thiamine diphosphate site. Asn241 is a Mg(2+) binding site.

It belongs to the transketolase family. DXPS subfamily. Homodimer. Mg(2+) is required as a cofactor. The cofactor is thiamine diphosphate.

Its subcellular location is the plastid. The protein localises to the chloroplast. It carries out the reaction D-glyceraldehyde 3-phosphate + pyruvate + H(+) = 1-deoxy-D-xylulose 5-phosphate + CO2. Its pathway is metabolic intermediate biosynthesis; 1-deoxy-D-xylulose 5-phosphate biosynthesis; 1-deoxy-D-xylulose 5-phosphate from D-glyceraldehyde 3-phosphate and pyruvate: step 1/1. Its function is as follows. Catalyzes the acyloin condensation reaction between C atoms 2 and 3 of pyruvate and glyceraldehyde 3-phosphate to yield 1-deoxy-D-xylulose-5-phosphate (DXP). Is a limiting enzyme for plastidic isoprenoid biosynthesis and essential for chloroplast development. In Oryza sativa subsp. japonica (Rice), this protein is Probable 1-deoxy-D-xylulose-5-phosphate synthase 2, chloroplastic.